We begin with the raw amino-acid sequence, 248 residues long: Triosephosphate isomerase (248 aa).

2 residues coordinate substrate: N11 and K13. The active-site Electrophile is H95. The active-site Proton acceptor is the E165.

The protein belongs to the triosephosphate isomerase family. In terms of assembly, homodimer.

It localises to the cytoplasm. The catalysed reaction is dihydroxyacetone phosphate = methylglyoxal + phosphate. The enzyme catalyses D-glyceraldehyde 3-phosphate = dihydroxyacetone phosphate. It functions in the pathway carbohydrate degradation; glycolysis; D-glyceraldehyde 3-phosphate from glycerone phosphate: step 1/1. The protein operates within carbohydrate biosynthesis; gluconeogenesis. Triosephosphate isomerase is an extremely efficient metabolic enzyme that catalyzes the interconversion between dihydroxyacetone phosphate (DHAP) and D-glyceraldehyde-3-phosphate (G3P) in glycolysis and gluconeogenesis. In terms of biological role, it is also responsible for the non-negligible production of methylglyoxal a reactive cytotoxic side-product that modifies and can alter proteins, DNA and lipids. This Gallus gallus (Chicken) protein is Triosephosphate isomerase (TPI1).